Here is an 829-residue protein sequence, read N- to C-terminus: G-type lectin S-receptor-like serine/threonine-protein kinase At1g34300 (829 aa).

Positions 1 to 25 are cleaved as a signal peptide; the sequence is MAVKTPFLKLLPLLLLLLHFPFSFS. Bulb-type lectin domains follow at residues 26-140 and 143-260; these read TIPL…SSFD and TDTI…PVNA. Residues 26 to 421 are Extracellular-facing; sequence TIPLGSVIYA…KGDDNNSKVH (396 aa). Residues asparagine 46, asparagine 98, asparagine 130, asparagine 151, asparagine 172, asparagine 178, asparagine 189, and asparagine 195 are each glycosylated (N-linked (GlcNAc...) asparagine). Residues 264–301 form the EGF-like domain; that stretch reads AVDQCLVYGYCGNFGICSYNDTNPICSCPSRNFDFVDV. Cystine bridges form between cysteine 268/cysteine 280, cysteine 274/cysteine 289, cysteine 317/cysteine 399, cysteine 350/cysteine 373, and cysteine 354/cysteine 360. 2 N-linked (GlcNAc...) asparagine glycosylation sites follow: asparagine 283 and asparagine 320. The Apple domain maps to 317–399; it reads CSGNTTMLDL…VPSTSYVKVC (83 aa). A glycan (N-linked (GlcNAc...) asparagine) is linked at asparagine 416. Residues 422–442 traverse the membrane as a helical segment; it reads LWIVAVAVIAGLLGLVAVEIG. Residues 443–829 lie on the Cytoplasmic side of the membrane; it reads LWWCCCRKNP…RISEGSMLGS (387 aa). The region spanning 484–759 is the Protein kinase domain; the sequence is KSFKEKLGAG…GKVVQMLEGI (276 aa). Residues 490–498 and lysine 512 contribute to the ATP site; that span reads LGAGGFGTV. Residue serine 532 is modified to Phosphoserine. Positions 572-589 are caM-binding; that stretch reads DSAKFLTWEYRFNIALGT. Aspartate 608 acts as the Proton acceptor in catalysis. Phosphoserine occurs at positions 625 and 799.

This sequence belongs to the protein kinase superfamily. Ser/Thr protein kinase family.

The protein resides in the cell membrane. It carries out the reaction L-seryl-[protein] + ATP = O-phospho-L-seryl-[protein] + ADP + H(+). It catalyses the reaction L-threonyl-[protein] + ATP = O-phospho-L-threonyl-[protein] + ADP + H(+). The polypeptide is G-type lectin S-receptor-like serine/threonine-protein kinase At1g34300 (Arabidopsis thaliana (Mouse-ear cress)).